The primary structure comprises 287 residues: Undecaprenyl-diphosphatase (287 aa).

Transmembrane regions (helical) follow at residues 50–70, 97–117, 131–151, 160–180, 206–226, 234–254, and 264–284; these read PGVS…IAYF, LGFA…GIKF, IPSI…AEQV, VVLG…LLPG, FLLG…DALA, LPLL…IDWL, and WLFV…WGVY.

Belongs to the UppP family.

It is found in the cell inner membrane. It catalyses the reaction di-trans,octa-cis-undecaprenyl diphosphate + H2O = di-trans,octa-cis-undecaprenyl phosphate + phosphate + H(+). Its function is as follows. Catalyzes the dephosphorylation of undecaprenyl diphosphate (UPP). Confers resistance to bacitracin. The sequence is that of Undecaprenyl-diphosphatase from Synechococcus sp. (strain CC9605).